The following is a 230-amino-acid chain: RING finger protein 141 (230 aa).

G2 is lipidated: N-myristoyl glycine. The segment at 155-192 (CCICMDGRADLILPCAHSFCQKCIDKWSDRHRNCPICR) adopts an RING-type zinc-finger fold.

In terms of tissue distribution, isoform 1 is testis-specific. Isoform 2 is expressed in heart, brain, skeletal muscle, kidney, pancreas, lung, liver and testis. Isoform 3 is expressed in heart, liver, and kidney.

It localises to the membrane. Its function is as follows. May be involved in spermatogenesis. This is RING finger protein 141 (Rnf141) from Mus musculus (Mouse).